Here is an 85-residue protein sequence, read N- to C-terminus: MAHKKAGGSTRNGRDSESKRLGVKRFGGESVLAGNIIVRQRGTKFHAGTNVGIGKDHTLFALSEGKVKFEVKGPKNRKFVSIDAE.

Positions 1–22 are disordered; that stretch reads MAHKKAGGSTRNGRDSESKRLG.

The protein belongs to the bacterial ribosomal protein bL27 family.

In Aliivibrio salmonicida (strain LFI1238) (Vibrio salmonicida (strain LFI1238)), this protein is Large ribosomal subunit protein bL27.